We begin with the raw amino-acid sequence, 373 residues long: 2-aminoethylphosphonate--pyruvate transaminase (373 aa).

At Lys-191 the chain carries N6-(pyridoxal phosphate)lysine.

Belongs to the class-V pyridoxal-phosphate-dependent aminotransferase family. PhnW subfamily. In terms of assembly, homodimer. Pyridoxal 5'-phosphate is required as a cofactor.

It catalyses the reaction (2-aminoethyl)phosphonate + pyruvate = phosphonoacetaldehyde + L-alanine. Its function is as follows. Involved in phosphonate degradation. In Burkholderia ambifaria (strain MC40-6), this protein is 2-aminoethylphosphonate--pyruvate transaminase.